A 57-amino-acid polypeptide reads, in one-letter code: Potassium channel toxin alpha-KTx 23.3 (57 aa).

The N-terminal stretch at 1 to 23 is a signal peptide; that stretch reads MKMSIVIILLLFTCLIATNGASG. 4 cysteine pairs are disulfide-bonded: Cys-26–Cys-46, Cys-32–Cys-51, Cys-36–Cys-53, and Cys-41–Cys-56.

Belongs to the short scorpion toxin superfamily. Potassium channel inhibitor family. Alpha-KTx 23 subfamily. As to expression, expressed by the venom gland.

The protein resides in the secreted. Functionally, this toxin shows both immunosuppressive and anti-inflammatory activities. It has the potential to inhibit human T cell activation, since it reduces IL-2 secretion and the expression of T cell activation marker CD69 and acts as an anti-inflammatory agent, since it provokes the reduction of secretion of both IFN-gamma and TNF-alpha. In vivo, the delayed-type hypersensitivity response in rat autoimmune disease model is ameliorated in the presence of this toxin. Acts by blocking Kv1.3/KCNA3 potassium channels of T-lymphocytes. The chain is Potassium channel toxin alpha-KTx 23.3 from Scorpiops tibetanus (Scorpion).